The sequence spans 169 residues: NADH-quinone oxidoreductase subunit I (169 aa).

2 consecutive 4Fe-4S ferredoxin-type domains span residues 61–90 (RRYD…IESE) and 100–129 (TRYD…ETHI). [4Fe-4S] cluster contacts are provided by Cys-70, Cys-73, Cys-76, Cys-80, Cys-109, Cys-112, Cys-115, and Cys-119.

It belongs to the complex I 23 kDa subunit family. In terms of assembly, NDH-1 is composed of 14 different subunits. Subunits NuoA, H, J, K, L, M, N constitute the membrane sector of the complex. It depends on [4Fe-4S] cluster as a cofactor.

It is found in the cell inner membrane. The catalysed reaction is a quinone + NADH + 5 H(+)(in) = a quinol + NAD(+) + 4 H(+)(out). NDH-1 shuttles electrons from NADH, via FMN and iron-sulfur (Fe-S) centers, to quinones in the respiratory chain. The immediate electron acceptor for the enzyme in this species is believed to be ubiquinone. Couples the redox reaction to proton translocation (for every two electrons transferred, four hydrogen ions are translocated across the cytoplasmic membrane), and thus conserves the redox energy in a proton gradient. The protein is NADH-quinone oxidoreductase subunit I of Verminephrobacter eiseniae (strain EF01-2).